The chain runs to 315 residues: Acetaldehyde dehydrogenase (315 aa).

13–16 contacts NAD(+); it reads SGNI. Catalysis depends on Cys-143, which acts as the Acyl-thioester intermediate. NAD(+)-binding positions include 174 to 182 and Asn-285; that span reads SAGPGTRKN.

The protein belongs to the acetaldehyde dehydrogenase family.

The enzyme catalyses acetaldehyde + NAD(+) + CoA = acetyl-CoA + NADH + H(+). The protein is Acetaldehyde dehydrogenase of Shewanella woodyi (strain ATCC 51908 / MS32).